A 628-amino-acid polypeptide reads, in one-letter code: Eukaryotic peptide chain release factor GTP-binding subunit ERF3B (628 aa).

The span at 1–10 (MDSGSSSSDS) shows a compositional bias: low complexity. 3 disordered regions span residues 1–49 (MDSG…SAFS), 72–124 (FLRG…LEGS), and 146–195 (LEES…VIVP). The region spanning 201–425 (KEHVNVVFIG…YLDNLPNFNR (225 aa)) is the tr-type G domain. Positions 210 to 217 (GHVDAGKS) are G1. 213-218 (DAGKST) lines the GTP pocket. The interval 266–270 (GKTVE) is G2. The interval 287 to 290 (DAPG) is G3. GTP-binding positions include 349 to 352 (NKMD) and 391 to 393 (SGL). Positions 349-352 (NKMD) are G4. Residues 391–393 (SGL) are G5.

Belongs to the TRAFAC class translation factor GTPase superfamily. Classic translation factor GTPase family. ERF3 subfamily. Component of the eRF1-eRF3-GTP ternary complex, composed of ETF1/ERF1 and ERF3 (GSPT1/ERF3A or GSPT2/ERF3B) and GTP. Component of the transient SURF (SMG1-UPF1-eRF1-eRF3) complex. Interacts with UPF1 and PABPC1. In terms of tissue distribution, highly expressed in IUCC stage II colorectal cancer (CRC).

The protein localises to the cytoplasm. The enzyme catalyses GTP + H2O = GDP + phosphate + H(+). In terms of biological role, GTPase component of the eRF1-eRF3-GTP ternary complex, a ternary complex that mediates translation termination in response to the termination codons UAA, UAG and UGA. GSPT2/ERF3B mediates ETF1/ERF1 delivery to stop codons: The eRF1-eRF3-GTP complex binds to a stop codon in the ribosomal A-site. GTP hydrolysis by GSPT2/ERF3B induces a conformational change that leads to its dissociation, permitting ETF1/ERF1 to accommodate fully in the A-site. Component of the transient SURF complex which recruits UPF1 to stalled ribosomes in the context of nonsense-mediated decay (NMD) of mRNAs containing premature stop codons. The chain is Eukaryotic peptide chain release factor GTP-binding subunit ERF3B (GSPT2) from Homo sapiens (Human).